Here is a 273-residue protein sequence, read N- to C-terminus: LOB domain-containing protein 20 (273 aa).

Positions 1–15 are enriched in basic and acidic residues; it reads MADQQRGHNTSDSRR. A disordered region spans residues 1-39; that stretch reads MADQQRGHNTSDSRRKSLAGKRTSQQTPTSSLSSGGVSM. The span at 23–39 shows a compositional bias: low complexity; it reads TSQQTPTSSLSSGGVSM. The 103-residue stretch at 50 to 152 folds into the LOB domain; it reads SPCGACKFLR…AELSVVQSQL (103 aa). The disordered stretch occupies residues 221-248; sequence LEHSLQPMPPHQQRRGDYQHEDEEESGA.

This sequence belongs to the LOB domain-containing protein family. Expressed in roots and flowers.

The chain is LOB domain-containing protein 20 (LBD20) from Arabidopsis thaliana (Mouse-ear cress).